Reading from the N-terminus, the 200-residue chain is Recombination protein RecR (200 aa).

The C4-type zinc-finger motif lies at Cys57 to Cys72. The Toprim domain occupies Thr80–Pro175.

This sequence belongs to the RecR family.

Its function is as follows. May play a role in DNA repair. It seems to be involved in an RecBC-independent recombinational process of DNA repair. It may act with RecF and RecO. This Pseudomonas fluorescens (strain SBW25) protein is Recombination protein RecR.